The primary structure comprises 338 residues: Holliday junction branch migration complex subunit RuvB (338 aa).

The segment covering 1–14 (MENDHGILSDHPSG) has biased composition (basic and acidic residues). Residues 1–21 (MENDHGILSDHPSGEEESQVE) are disordered. The interval 3–185 (NDHGILSDHP…FGIVEHMNYY (183 aa)) is large ATPase domain (RuvB-L). Residues Leu-24, Arg-25, Gly-66, Lys-69, Thr-70, Thr-71, 132 to 134 (EDY), Arg-175, Tyr-185, and Arg-222 each bind ATP. Thr-70 serves as a coordination point for Mg(2+). The segment at 186–256 (TQDELTKIIF…IVKQALSLLQ (71 aa)) is small ATPAse domain (RuvB-S). The head domain (RuvB-H) stretch occupies residues 259–338 (DRGLDEIDRK…LGIEYPTDKN (80 aa)). DNA-binding residues include Arg-314 and Arg-319.

Belongs to the RuvB family. In terms of assembly, homohexamer. Forms an RuvA(8)-RuvB(12)-Holliday junction (HJ) complex. HJ DNA is sandwiched between 2 RuvA tetramers; dsDNA enters through RuvA and exits via RuvB. An RuvB hexamer assembles on each DNA strand where it exits the tetramer. Each RuvB hexamer is contacted by two RuvA subunits (via domain III) on 2 adjacent RuvB subunits; this complex drives branch migration. In the full resolvosome a probable DNA-RuvA(4)-RuvB(12)-RuvC(2) complex forms which resolves the HJ.

It localises to the cytoplasm. It carries out the reaction ATP + H2O = ADP + phosphate + H(+). In terms of biological role, the RuvA-RuvB-RuvC complex processes Holliday junction (HJ) DNA during genetic recombination and DNA repair, while the RuvA-RuvB complex plays an important role in the rescue of blocked DNA replication forks via replication fork reversal (RFR). RuvA specifically binds to HJ cruciform DNA, conferring on it an open structure. The RuvB hexamer acts as an ATP-dependent pump, pulling dsDNA into and through the RuvAB complex. RuvB forms 2 homohexamers on either side of HJ DNA bound by 1 or 2 RuvA tetramers; 4 subunits per hexamer contact DNA at a time. Coordinated motions by a converter formed by DNA-disengaged RuvB subunits stimulates ATP hydrolysis and nucleotide exchange. Immobilization of the converter enables RuvB to convert the ATP-contained energy into a lever motion, pulling 2 nucleotides of DNA out of the RuvA tetramer per ATP hydrolyzed, thus driving DNA branch migration. The RuvB motors rotate together with the DNA substrate, which together with the progressing nucleotide cycle form the mechanistic basis for DNA recombination by continuous HJ branch migration. Branch migration allows RuvC to scan DNA until it finds its consensus sequence, where it cleaves and resolves cruciform DNA. The sequence is that of Holliday junction branch migration complex subunit RuvB from Limosilactobacillus reuteri (strain DSM 20016) (Lactobacillus reuteri).